The following is a 1604-amino-acid chain: Putative surface cell antigen sca2 (1604 aa).

Residues 1–33 form the signal peptide; it reads MSLQNSHSKKYVLTFFMSTCLLTSSFLSTSARA. Disordered stretches follow at residues 324–354, 554–603, and 1183–1240; these read TTKP…RTKP, NVNN…SNPN, and QQEN…KSLL. Residues 554 to 564 show a composition bias toward low complexity; it reads NVNNNSNKGQN. The span at 568 to 587 shows a compositional bias: pro residues; sequence ILPPTPPLNGSMPPSPPPPL. Composition is skewed to basic and acidic residues over residues 1193 to 1213 and 1227 to 1240; these read SSTK…KSDS and SKND…KSLL. In terms of domain architecture, Autotransporter spans 1325–1604; that stretch reads EASINRGVWI…QGLIKLKVNL (280 aa).

It localises to the cell outer membrane. The protein is Putative surface cell antigen sca2 (sca2) of Rickettsia felis (strain ATCC VR-1525 / URRWXCal2) (Rickettsia azadi).